The primary structure comprises 579 residues: Protein LYRIC (579 aa).

Residues 1 to 48 (MAARSWQDELAQQAEEGSARLRELLSVGLGFLRTELGLDLGLEPKRYP) lie on the Lumenal side of the membrane. Residues 1–71 (MAARSWQDEL…LLLFLLGYGW (71 aa)) form an activation of NF-kappa-B region. A helical membrane pass occupies residues 49–69 (GWVILVGTGALGLLLLFLLGY). Topologically, residues 70 to 579 (GWAAACAGAR…KKKKKARRET (510 aa)) are cytoplasmic. Residues 72-168 (AAACAGARKK…EKSKKNKKKS (97 aa)) are interaction with BCCIP. The disordered stretch occupies residues 78–222 (ARKKRRSPPR…SGSLDSTIPG (145 aa)). Positions 100-204 (DDLAQLKNLR…ISHREKRQQR (105 aa)) are interaction with RELA. A compositionally biased stretch (basic and acidic residues) spans 108–126 (LRSEEQKKKNRKKLPEKPK). Residues 159–168 (EKSKKNKKKS) are compositionally biased toward basic residues. Ser-179 bears the Phosphoserine mark. Residues 197–207 (HREKRQQRKRD) show a composition bias toward basic residues. Phosphoserine is present on residues Ser-215 and Ser-250. Lys-263 carries the N6-acetyllysine modification. The segment at 277–579 (NLTVNGGGWS…KKKKKARRET (303 aa)) is disordered. Phosphoserine occurs at positions 297, 303, and 308. Positions 317 to 329 (SAWTQDTGDTNAN) are enriched in polar residues. Residues Ser-341 and Ser-366 each carry the phosphoserine modification. Composition is skewed to polar residues over residues 351-369 (EPVS…SRNQ), 380-391 (NGLSSADPSSDW), and 410-420 (LKSQEPISNDQ). The lung-homing for mammary tumors stretch occupies residues 378-440 (GLNGLSSADP…EGALPTGKSK (63 aa)). Phosphoserine occurs at positions 412 and 423. Residues 421-431 (KVSDDDKEKGE) show a composition bias toward basic and acidic residues. A compositionally biased stretch (basic residues) spans 438-448 (KSKKKKKKKKK). The span at 449–470 (QGEDNSHTQDTEDLEKDTREEL) shows a compositional bias: basic and acidic residues. Residues Ser-454, Ser-475, Ser-491, and Ser-493 each carry the phosphoserine modification. Polar residues-rich tracts occupy residues 517 to 533 (PSIT…SSQV) and 546 to 565 (NAKQ…NWES). Ser-565 carries the phosphoserine modification. Over residues 568–579 (QIKKKKKARRET) the composition is skewed to basic residues.

As to quaternary structure, interacts with BCCIP, CREBBP/CBP and RELA/p65. In terms of tissue distribution, in the mammary gland, expressed at the apical surface of epithelial cells lining ducts, as well as in the mammary fat pad. Not detected in the spleen, kidney, lung, or skin; minute amounts seen in the liver. Expressed in Purkinje neurons in the early postnatal and adult cerebellum. Overexpressed in mammary tumors (at protein level).

It is found in the endoplasmic reticulum membrane. The protein resides in the nucleus membrane. The protein localises to the cell junction. Its subcellular location is the tight junction. It localises to the nucleus. It is found in the nucleolus. The protein resides in the cytoplasm. The protein localises to the perinuclear region. In terms of biological role, down-regulates SLC1A2/EAAT2 promoter activity when expressed ectopically. Activates the nuclear factor kappa-B (NF-kappa-B) transcription factor. Promotes anchorage-independent growth of immortalized melanocytes and astrocytes which is a key component in tumor cell expansion. Promotes lung metastasis and also has an effect on bone and brain metastasis, possibly by enhancing the seeding of tumor cells to the target organ endothelium. Induces chemoresistance. The protein is Protein LYRIC (Mtdh) of Mus musculus (Mouse).